Consider the following 184-residue polypeptide: Bacterial microcompartment shell protein PduT (184 aa).

BMC domains are found at residues 4–86 (AIGI…PAIS) and 96–182 (AVGI…RQMV). Residue C38 participates in [4Fe-4S] cluster binding.

This sequence belongs to the bacterial microcompartments protein family. As to quaternary structure, homotrimerizes to form a pseudohexamer with a large central pore, which is probably the binding site for the [4Fe-4S] center. Interacts with PduS. Originally suggested to be a homotetramer; this is incorrect. Requires [4Fe-4S] cluster as cofactor.

Its subcellular location is the bacterial microcompartment. Its pathway is polyol metabolism; 1,2-propanediol degradation. Its function is as follows. A minor shell protein of the bacterial microcompartment (BMC) dedicated to 1,2-propanediol (1,2-PD) degradation. Overexpression of this protein leads to cells with either deposits or having lamina-like structures in the cytoplasm. Not absolutely required to make artificial BMCs. May selectively transport specific metabolites. Expression of a cosmid containing the full 21-gene pdu operon in E.coli allows E.coli to grow on 1,2-propanediol (1,2-PD) with the appearance of bacterial microcompartments (BMC) in its cytoplasm. In terms of biological role, the 1,2-PD-specific bacterial microcompartment (BMC) concentrates low levels of 1,2-PD catabolic enzymes, concentrates volatile reaction intermediates thus enhancing pathway flux and keeps the level of toxic, mutagenic propionaldehyde low. The polypeptide is Bacterial microcompartment shell protein PduT (Citrobacter freundii).